The primary structure comprises 141 residues: Large-conductance mechanosensitive channel (141 aa).

3 consecutive transmembrane segments (helical) span residues 8–28 (FALK…AAFG), 38–58 (IIMP…FFPL), and 80–100 (GNFL…FLIV).

Belongs to the MscL family. In terms of assembly, homopentamer.

Its subcellular location is the cell inner membrane. Functionally, channel that opens in response to stretch forces in the membrane lipid bilayer. May participate in the regulation of osmotic pressure changes within the cell. The chain is Large-conductance mechanosensitive channel from Beijerinckia indica subsp. indica (strain ATCC 9039 / DSM 1715 / NCIMB 8712).